A 63-amino-acid polypeptide reads, in one-letter code: Putative ankyrin repeat protein RF_p14 (63 aa).

ANK repeat units lie at residues 11 to 43 (KLNQ…CRDH) and 44 to 63 (QGDT…ILDI).

This is Putative ankyrin repeat protein RF_p14 from Rickettsia felis (strain ATCC VR-1525 / URRWXCal2) (Rickettsia azadi).